Reading from the N-terminus, the 762-residue chain is Lysyl oxidase homolog 2B (762 aa).

An N-terminal signal peptide occupies residues 1–20; it reads MLALWSISFVLLCSWRLSYA. 4 SRCR domains span residues 53–154, 183–292, 316–417, and 427–536; these read LRLA…VVCS, IRPI…VSCI, VRLR…VKCN, and LRLS…VSCS. Intrachain disulfides connect cysteine 79/cysteine 143, cysteine 92/cysteine 153, cysteine 123/cysteine 133, cysteine 213/cysteine 281, cysteine 226/cysteine 291, cysteine 260/cysteine 270, cysteine 341/cysteine 406, cysteine 354/cysteine 416, and cysteine 385/cysteine 395. Residue asparagine 278 is glycosylated (N-linked (GlcNAc...) asparagine). A glycan (N-linked (GlcNAc...) asparagine) is linked at asparagine 447. 3 disulfides stabilise this stretch: cysteine 456-cysteine 522, cysteine 469-cysteine 535, and cysteine 503-cysteine 513. The lysyl-oxidase like stretch occupies residues 540–742; sequence PDLVLNPQVV…WMYNCHIGGS (203 aa). Residues aspartate 541 and leucine 542 each contribute to the Ca(2+) site. 4 disulfides stabilise this stretch: cysteine 565/cysteine 616, cysteine 571/cysteine 686, cysteine 648/cysteine 664, and cysteine 654/cysteine 676. Residues histidine 617, histidine 619, and histidine 621 each contribute to the Cu cation site. An N-linked (GlcNAc...) asparagine glycan is attached at asparagine 635. Positions 644–680 form a cross-link, lysine tyrosylquinone (Lys-Tyr); the sequence is KASFCLEDSECDEGIEKRYECANFGEQGITVGCWDTY. The residue at position 680 (tyrosine 680) is a 2',4',5'-topaquinone. Positions 713, 715, 718, and 719 each coordinate Ca(2+). A disulfide bridge connects residues cysteine 723 and cysteine 737.

It belongs to the lysyl oxidase family. Cu cation is required as a cofactor. Lysine tyrosylquinone residue serves as cofactor. In terms of processing, the lysine tyrosylquinone cross-link (LTQ) is generated by condensation of the epsilon-amino group of a lysine with a topaquinone produced by oxidation of tyrosine.

The protein localises to the secreted. It localises to the extracellular space. It is found in the extracellular matrix. Its subcellular location is the basement membrane. The protein resides in the nucleus. The protein localises to the chromosome. It localises to the endoplasmic reticulum. The catalysed reaction is L-lysyl-[protein] + O2 + H2O = (S)-2-amino-6-oxohexanoyl-[protein] + H2O2 + NH4(+). Functionally, mediates the post-translational oxidative deamination of lysine residues on target proteins leading to the formation of deaminated lysine (allysine). Acts as a transcription corepressor and specifically mediates deamination of trimethylated 'Lys-4' of histone H3 (H3K4me3), a specific tag for epigenetic transcriptional activation. Shows no activity against histone H3 when it is trimethylated on 'Lys-9' (H3K9me3) or 'Lys-27' (H3K27me3) or when 'Lys-4' is monomethylated (H3K4me1) or dimethylated (H3K4me2). Also mediates deamination of methylated TAF10, a member of the transcription factor IID (TFIID) complex, which induces release of TAF10 from promoters, leading to inhibition of TFIID-dependent transcription. LOXL2-mediated deamination of TAF10 results in transcriptional repression of genes required for embryonic stem cell pluripotency. Involved in epithelial to mesenchymal transition (EMT) and participates in repression of E-cadherin, probably by mediating deamination of histone H3. When secreted into the extracellular matrix, promotes cross-linking of extracellular matrix proteins by mediating oxidative deamination of peptidyl lysine residues in precursors to fibrous collagen and elastin. Acts as a regulator of sprouting angiogenesis, probably via collagen IV scaffolding. Acts as a regulator of chondrocyte differentiation, probably by regulating expression of factors that control chondrocyte differentiation. Required with loxl2a for correct expression of Sox2 and for neural differentiation. The chain is Lysyl oxidase homolog 2B (loxl2b) from Danio rerio (Zebrafish).